The chain runs to 324 residues: T-cell acute lymphocytic leukemia protein 1 homolog (324 aa).

Positions 1–49 (MMEKLKSEQFPLSPSAEGCASPPRGDGDARGKQEGTTAETGEHRLPEEL) are disordered. The bHLH domain occupies 185–237 (VRRIFTNSRERWRQQNVNGAFAELRKLIPTHPPDKKLSKNEILRLAMKYINFL). The tract at residues 276 to 324 (SPNSSCGSLLDGDASPESFTEDQDSSVESRPSARGLHHSSLPLDGNAQR) is disordered.

Expressed in hemopoietic and endothelial lineages. Isoform beta emerges first, expressing in the entire anterior and posterior lateral mesoderm (ALM and PLM respectively), and in the ventral wall of the dorsal aorta, where definitive hemopoiesis begins. Isoform alpha expresses later as two pairs of stripes in the PLM and ALM, and becomes restricted to the intermediate cell mass (ICM) by the 18-somite stage. The ICM is the key site of primitive hemopoiesis, giving rise to the erythroid lineage. Also expressed in all stages of endocardial cell migration and in the developing midbrain, hindbrain and spinal cord. In adults, expressed in the main hemopoietic organs, namely the kidney (where isoform alpha is the predominant isoform) and the spleen. Also expressed in the liver, gill and gonads.

It is found in the nucleus. Functionally, transcription factor that plays a pivotal role in hemopoietic and endothelial development, acting synergistically with lmo2 and downstream of clo. Specifies mesodermal precursors to a hemangioblast cell fate. Hemangioblasts are bipotential precursors of blood and endothelium, and in the absence of hemopoietic induction cues such as gata1, tal1/scl-lmo2-induced hemangioblasts differentiate into endothelial cells. Isoform alpha and isoform beta are redundant for the initiation of primitive hemopoiesis but have distinct roles in the regulation of primitive erythroid differentiation and definitive hemopoietic stem cell specification, most likely due to differences in expression levels. Specification of definitive hemopoietic stem cells requires isoform beta. DNA binding is required for erythroid maturation, but not for its other hemopoietic functions. Endothelial roles include development of the dorsal aorta, the site of definitive hemopoiesis in the embryo. Required for angiogenesis but not angioblast specification. Has an additional role in endocardium formation during heart development. May play a role in central nervous system development. This is T-cell acute lymphocytic leukemia protein 1 homolog from Danio rerio (Zebrafish).